Here is a 377-residue protein sequence, read N- to C-terminus: Prostaglandin reductase-3 (377 aa).

The residue at position 35 (K35) is an N6-acetyllysine. Residues T185, S205, K209, Y224, S247, I269, and Y275 each coordinate NADP(+). S299 carries the phosphoserine modification. Residues 303-305 and N361 contribute to the NADP(+) site; that span reads FFL.

It belongs to the zinc-containing alcohol dehydrogenase family. Quinone oxidoreductase subfamily. Widely expressed.

Its subcellular location is the peroxisome. It catalyses the reaction 13,14-dihydro-15-oxo-prostaglandin E2 + NADP(+) = 15-oxoprostaglandin E2 + NADPH + H(+). The enzyme catalyses 13,14-dihydro-15-oxo-prostaglandin E1 + NADP(+) = 15-oxoprostaglandin E1 + NADPH + H(+). It carries out the reaction 13,14-dihydro-15-oxo-PGF2alpha + NADP(+) = 15-oxoprostaglandin F2alpha + NADPH + H(+). The catalysed reaction is 13,14-dihydro-15-oxo-prostaglandin F1alpha + NADP(+) = 15-oxoprostaglandin F1alpha + NADPH + H(+). Functionally, functions as 15-oxo-prostaglandin 13-reductase and acts on 15-keto-PGE1, 15-keto-PGE2, 15-keto-PGE1-alpha and 15-keto-PGE2-alpha with highest efficiency towards 15-keto-PGE2-alpha. Overexpression represses transcriptional activity of PPARG and inhibits adipocyte differentiation. The sequence is that of Prostaglandin reductase-3 from Mus musculus (Mouse).